We begin with the raw amino-acid sequence, 87 residues long: U3-theraphotoxin-Hhn1c (87 aa).

Positions 1–24 are cleaved as a signal peptide; it reads MVNMKASMFLTFAGLVLLFVVCHA. Residues 25–52 constitute a propeptide that is removed on maturation; it reads SESEEKEFPKEMLSSIFAVDDDFKQEER. Cystine bridges form between Cys-54/Cys-67, Cys-61/Cys-72, and Cys-66/Cys-79.

The protein belongs to the neurotoxin 10 (Hwtx-1) family. 51 (Hntx-8) subfamily. Hntx-8 sub-subfamily. In terms of tissue distribution, expressed by the venom gland.

The protein localises to the secreted. Ion channel inhibitor. The protein is U3-theraphotoxin-Hhn1c of Cyriopagopus hainanus (Chinese bird spider).